Consider the following 253-residue polypeptide: Ubiquinone/menaquinone biosynthesis C-methyltransferase UbiE (253 aa).

S-adenosyl-L-methionine contacts are provided by residues T76, D97, and 125 to 126 (NA).

This sequence belongs to the class I-like SAM-binding methyltransferase superfamily. MenG/UbiE family.

The catalysed reaction is a 2-demethylmenaquinol + S-adenosyl-L-methionine = a menaquinol + S-adenosyl-L-homocysteine + H(+). It catalyses the reaction a 2-methoxy-6-(all-trans-polyprenyl)benzene-1,4-diol + S-adenosyl-L-methionine = a 5-methoxy-2-methyl-3-(all-trans-polyprenyl)benzene-1,4-diol + S-adenosyl-L-homocysteine + H(+). The protein operates within quinol/quinone metabolism; menaquinone biosynthesis; menaquinol from 1,4-dihydroxy-2-naphthoate: step 2/2. It participates in cofactor biosynthesis; ubiquinone biosynthesis. Functionally, methyltransferase required for the conversion of demethylmenaquinol (DMKH2) to menaquinol (MKH2) and the conversion of 2-polyprenyl-6-methoxy-1,4-benzoquinol (DDMQH2) to 2-polyprenyl-3-methyl-6-methoxy-1,4-benzoquinol (DMQH2). The sequence is that of Ubiquinone/menaquinone biosynthesis C-methyltransferase UbiE from Nitrobacter hamburgensis (strain DSM 10229 / NCIMB 13809 / X14).